Reading from the N-terminus, the 347-residue chain is NADH-ubiquinone oxidoreductase chain 2 (347 aa).

10 helical membrane-spanning segments follow: residues Ile-13–Leu-33, Ala-55–Leu-75, Leu-96–Pro-116, Val-122–Met-142, Thr-151–Asn-171, Ile-178–Pro-198, Asp-199–Leu-219, Leu-237–Leu-257, Gly-274–Val-294, and Leu-326–Ile-346.

This sequence belongs to the complex I subunit 2 family. Core subunit of respiratory chain NADH dehydrogenase (Complex I) which is composed of 45 different subunits. Interacts with TMEM242.

The protein localises to the mitochondrion inner membrane. It carries out the reaction a ubiquinone + NADH + 5 H(+)(in) = a ubiquinol + NAD(+) + 4 H(+)(out). Functionally, core subunit of the mitochondrial membrane respiratory chain NADH dehydrogenase (Complex I) which catalyzes electron transfer from NADH through the respiratory chain, using ubiquinone as an electron acceptor. Essential for the catalytic activity and assembly of complex I. The protein is NADH-ubiquinone oxidoreductase chain 2 of Pongo abelii (Sumatran orangutan).